Here is a 62-residue protein sequence, read N- to C-terminus: Photosystem II reaction center protein Z (62 aa).

2 helical membrane passes run 8 to 28 (AVFA…VVFA) and 41 to 61 (FSGT…NSLI).

This sequence belongs to the PsbZ family. In terms of assembly, PSII is composed of 1 copy each of membrane proteins PsbA, PsbB, PsbC, PsbD, PsbE, PsbF, PsbH, PsbI, PsbJ, PsbK, PsbL, PsbM, PsbT, PsbY, PsbZ, Psb30/Ycf12, at least 3 peripheral proteins of the oxygen-evolving complex and a large number of cofactors. It forms dimeric complexes.

Its subcellular location is the plastid. It is found in the chloroplast thylakoid membrane. Functionally, may control the interaction of photosystem II (PSII) cores with the light-harvesting antenna, regulates electron flow through the 2 photosystem reaction centers. PSII is a light-driven water plastoquinone oxidoreductase, using light energy to abstract electrons from H(2)O, generating a proton gradient subsequently used for ATP formation. This chain is Photosystem II reaction center protein Z, found in Oenothera elata subsp. hookeri (Hooker's evening primrose).